The following is a 183-amino-acid chain: Ran guanine nucleotide release factor (183 aa).

An interaction with RAN region spans residues 23–66 (ELRQIPDNQEVFAHSQTDQSIIIELLEYQSQVQDADAARYHFED).

The protein belongs to the MOG1 family. As to quaternary structure, monomer. Interacts with ran.

The protein resides in the nucleus. It localises to the cytoplasm. The protein localises to the perinuclear region. Its subcellular location is the cell membrane. May regulate the intracellular trafficking of RAN. Promotes guanine nucleotide release from RAN and inhibits binding of new GTP. Plays a role in the regulation of the levels of GTP-bound RAN in the nucleus. Required for normal expression of the ion channel hcn4 and for normal expression of the cardiac transcription factors nkx2.5, gata4 and hand2 during embryonic development. Required for normal embryonic heart development and normal heart rate. The sequence is that of Ran guanine nucleotide release factor from Danio rerio (Zebrafish).